The sequence spans 78 residues: Large ribosomal subunit protein bL28 (78 aa).

It belongs to the bacterial ribosomal protein bL28 family.

This Pseudoalteromonas atlantica (strain T6c / ATCC BAA-1087) protein is Large ribosomal subunit protein bL28.